A 446-amino-acid polypeptide reads, in one-letter code: Tubulin beta-1 chain (446 aa).

Residues glutamine 11, glutamate 69, serine 138, glycine 142, threonine 143, glycine 144, asparagine 204, and asparagine 226 each coordinate GTP. Mg(2+) is bound at residue glutamate 69. Residues 422-446 form a disordered region; it reads YQQYQDATADEEGEYEDEEEGDLQD. Positions 429 to 446 are enriched in acidic residues; the sequence is TADEEGEYEDEEEGDLQD.

This sequence belongs to the tubulin family. In terms of assembly, dimer of alpha and beta chains. A typical microtubule is a hollow water-filled tube with an outer diameter of 25 nm and an inner diameter of 15 nM. Alpha-beta heterodimers associate head-to-tail to form protofilaments running lengthwise along the microtubule wall with the beta-tubulin subunit facing the microtubule plus end conferring a structural polarity. Microtubules usually have 13 protofilaments but different protofilament numbers can be found in some organisms and specialized cells. Mg(2+) serves as cofactor. In terms of tissue distribution, found in areas of rapidly dividing tissues.

It is found in the cytoplasm. It localises to the cytoskeleton. Functionally, tubulin is the major constituent of microtubules, a cylinder consisting of laterally associated linear protofilaments composed of alpha- and beta-tubulin heterodimers. Microtubules grow by the addition of GTP-tubulin dimers to the microtubule end, where a stabilizing cap forms. Below the cap, tubulin dimers are in GDP-bound state, owing to GTPase activity of alpha-tubulin. The polypeptide is Tubulin beta-1 chain (TUBB1) (Zea mays (Maize)).